A 176-amino-acid chain; its full sequence is Isopentenyl-diphosphate Delta-isomerase (176 aa).

Residues His22 and His28 each contribute to the Mn(2+) site. Residues 26-160 (LRHKAVSVFV…PERYTPWLRI (135 aa)) enclose the Nudix hydrolase domain. Residue Cys62 is part of the active site. His64 provides a ligand contact to Mn(2+). Position 82 (Glu82) interacts with Mg(2+). Mn(2+) is bound by residues Glu108 and Glu110. Glu110 is an active-site residue.

It belongs to the IPP isomerase type 1 family. Mg(2+) is required as a cofactor. Mn(2+) serves as cofactor.

The protein localises to the cytoplasm. It catalyses the reaction isopentenyl diphosphate = dimethylallyl diphosphate. It participates in isoprenoid biosynthesis; dimethylallyl diphosphate biosynthesis; dimethylallyl diphosphate from isopentenyl diphosphate: step 1/1. It functions in the pathway porphyrin-containing compound metabolism; chlorophyll biosynthesis. Catalyzes the 1,3-allylic rearrangement of the homoallylic substrate isopentenyl (IPP) to its highly electrophilic allylic isomer, dimethylallyl diphosphate (DMAPP). In Dinoroseobacter shibae (strain DSM 16493 / NCIMB 14021 / DFL 12), this protein is Isopentenyl-diphosphate Delta-isomerase.